Reading from the N-terminus, the 98-residue chain is NADH-ubiquinone oxidoreductase chain 4L (98 aa).

The next 3 helical transmembrane spans lie at 1–21 (MTTM…GVYI), 29–49 (TLLC…LTLL), and 59–79 (FPLI…ALLV).

This sequence belongs to the complex I subunit 4L family. As to quaternary structure, core subunit of respiratory chain NADH dehydrogenase (Complex I) which is composed of 45 different subunits.

Its subcellular location is the mitochondrion inner membrane. It carries out the reaction a ubiquinone + NADH + 5 H(+)(in) = a ubiquinol + NAD(+) + 4 H(+)(out). Core subunit of the mitochondrial membrane respiratory chain NADH dehydrogenase (Complex I) which catalyzes electron transfer from NADH through the respiratory chain, using ubiquinone as an electron acceptor. Part of the enzyme membrane arm which is embedded in the lipid bilayer and involved in proton translocation. This is NADH-ubiquinone oxidoreductase chain 4L (MT-ND4L) from Zaglossus bruijni (Western long-beaked echidna).